The sequence spans 423 residues: Diels-Alderase pyiF (423 aa).

The signal sequence occupies residues 1 to 17; the sequence is MLPSFIFVYSLLATATA. 3 N-linked (GlcNAc...) asparagine glycosylation sites follow: Asn60, Asn92, and Asn219.

Belongs to the Diels-Alderase family.

It participates in mycotoxin biosynthesis. Diels-Alderase; part of the gene cluster that mediates the biosynthesis of the mycotoxin pyrichalasin H, a tyrosine-derived cytochalasan that inhibits the growth of rice seedlings, but also inhibits lymphocyte capping and actin polymerization and alters cell morphology. Pyrichalasin H is indicated as the responsible agent for the genus-specific pathogenicity of M.grisea toward crabgrass. The first step in the pathway is catalyzed by the O-methyltransferase pyiA which methylates free tyrosine to generate the precursor O-methyltyrosine. The hybrid PKS-NRPS pyiS, assisted by the enoyl reductase pyiC, are responsible for fusion of the O-methyltyrosine precursor and the polyketide backbone. The polyketide synthase module (PKS) of pyiS is responsible for the synthesis of the polyketide backbone and the downstream nonribosomal peptide synthetase (NRPS) amidates the carboxyl end of the polyketide with the O-methyltyrosine precursor. As the NRPS A-domain demonstrates substrate tolerance, pyiS can also use phenylalanine, tyrosine and even para-chlorophenylalanine as amino acid precursor, which leads to the production of novel cytochalasans, including halogenated cytochalasans. Because pyiS lacks a designated enoylreductase (ER) domain, the required activity is provided the enoyl reductase pyiC. Reduction by the hydrolyase pyiE leads to 1,5-dihydropyrrolone, which is substrate for dehydration and intra-molecular Diels-Alder cyclization by the Diels-Alderase pyiF to yield the required isoindolone-fused macrocycle. The tailoring cytochrome P450 monooxygenases piyD and piyG catalyze the hydroxylation at C-18 and C-7, respectivily, whereas the short-chain dehydrogenase/reductase pyiH reduces the carbonyl at C-21 in preparation for the transfer of an acetyl group by the acetyltransferase pyiB. These 3 reactions whose order is not clear yet, lead to the production of O-methylpyrichalasin J, a deacetylated pyrichalasin H. Finally, pyiB to converts O-methylpyrichalasin J into the final product pyrichalasin H via acetylation of C-21. The chain is Diels-Alderase pyiF from Pyricularia grisea (Crabgrass-specific blast fungus).